Here is a 319-residue protein sequence, read N- to C-terminus: Telomere-binding protein cav (319 aa).

Positions 107-312 (RRKMVQPYPE…SISFQNSGSE (206 aa)) are required for binding to Su(var)205. Disordered stretches follow at residues 141–163 (WQKQKRRNQSAHATQPDSQDNEV) and 186–248 (PSDL…PDYY). 2 short sequence motifs (su(var)205-binding Pro-containing repeat) span residues 220–224 (PETQM) and 273–279 (PETEMNE). Positions 291–311 (SMSIGPSINSDGSISFQNSGS) are enriched in polar residues. The disordered stretch occupies residues 291-319 (SMSIGPSINSDGSISFQNSGSEPIDVDVN).

As to quaternary structure, interacts (via C-terminus) with Su(var)205 dimer (via hinge and chromoshadow domain) and with moi to form the terminin, telomere-capping, complex. Interacts with HP6, which is also part of the terminin complex.

The protein localises to the nucleus. Its subcellular location is the chromosome. It localises to the telomere. Its function is as follows. Binds to chromosome ends in a sequence-dependent manner and is required for telomere capping. This chain is Telomere-binding protein cav, found in Drosophila yakuba (Fruit fly).